The following is a 401-amino-acid chain: Phosphoglycerate kinase (401 aa).

Substrate contacts are provided by residues 23 to 25 (DLN), R38, 61 to 64 (HFGR), R120, and R153. Residues K203, E325, and 355 to 358 (GGDT) each bind ATP.

The protein belongs to the phosphoglycerate kinase family. Monomer.

It localises to the cytoplasm. The enzyme catalyses (2R)-3-phosphoglycerate + ATP = (2R)-3-phospho-glyceroyl phosphate + ADP. Its pathway is carbohydrate degradation; glycolysis; pyruvate from D-glyceraldehyde 3-phosphate: step 2/5. This chain is Phosphoglycerate kinase, found in Rhizobium johnstonii (strain DSM 114642 / LMG 32736 / 3841) (Rhizobium leguminosarum bv. viciae).